Here is a 372-residue protein sequence, read N- to C-terminus: Adaptive-response sensory-kinase SasA (372 aa).

One can recognise a Histidine kinase domain in the interval 147–360 (MVAHELRTPL…CFHFTVPVWQ (214 aa)). H150 carries the phosphohistidine; by autocatalysis modification.

Homooligomerizes. Interacts with KaiC. Participates in the KaiBC complex, whose core is composed of a KaiC homohexamer and 6 KaiB.

It catalyses the reaction ATP + protein L-histidine = ADP + protein N-phospho-L-histidine.. Functionally, member of the two-component regulatory system SasA/RpaA involved in genome-wide circadian gene expression. One of several clock output pathways. Participates in the Kai clock protein complex, the main circadian regulator in cyanobacteria, via its interaction with KaiC. KaiC enhances the autophosphorylation activity of SasA, which then transfers its phosphate group to RpaA to activate it. In addition to its output function, recruits fold-shifted KaiB (KaiB(fs)) to KaiC to cooperatively form the KaiB(6):KaiC(6) complex (independent of SasA kinase activity). Required for robustness of the circadian rhythm of gene expression and is involved in clock output, also required for adaptation to light/dark cycles. In Prochlorococcus marinus subsp. pastoris (strain CCMP1986 / NIES-2087 / MED4), this protein is Adaptive-response sensory-kinase SasA.